A 1069-amino-acid polypeptide reads, in one-letter code: RE1-silencing transcription factor (1069 aa).

The segment at 32–121 (DLHDLSKAEL…SLELSVVEPQ (90 aa)) is interaction with SIN3A. The interval 43 to 57 (APQLIMLANVALTGE) is interaction with SIN3B. The tract at residues 85–104 (SDSEGEGLEESAELKGDPSG) is disordered. The interval 144–417 (PVAEDKCKNL…KSKHPTCPSK (274 aa)) is interaction with ZFP90. The C2H2-type 1 zinc-finger motif lies at 158–180 (FRCKPCQYEAESEEQFVHHIRVH). The segment at 200–211 (SGASPSEEGEFS) is required for binding to the neuron-restrictive silencer element. 7 C2H2-type zinc fingers span residues 215-237 (IRCD…LKHH), 247-269 (YKCI…LRNH), 275-297 (YTCS…VRTH), 303-325 (YKCE…MRTH), 331-354 (FKCD…RQVH), 360-382 (LNCP…VELH), and 388-411 (FNCP…KSKH). Disordered regions lie at residues 425–737 (KLKK…MELP) and 830–1022 (KASK…GKEG). The span at 451 to 482 (EQAKTKGVDASARRSERPVKGVGKDVPKEKKP) shows a compositional bias: basic and acidic residues. Polar residues predominate over residues 484 to 493 (SNASVVQVTT). 2 stretches are compositionally biased toward basic and acidic residues: residues 498 to 511 (SAVE…KHTD) and 554 to 576 (ESKP…KADK). Over residues 584–600 (KGGKKTALKTKTAKKGS) the composition is skewed to basic residues. Over residues 630–643 (AVVTPSGSTQTELS) the composition is skewed to polar residues. Composition is skewed to pro residues over residues 679–706 (PSPP…PCPM) and 713–734 (PSPP…PLPM). Basic and acidic residues-rich tracts occupy residues 851-860 (RREETPKDQE) and 876-886 (GGTEEAGESRA). Positions 894–904 (STSALSSEQSS) are enriched in low complexity. A compositionally biased stretch (basic and acidic residues) spans 930 to 943 (TEQKTDRVPLKDSA). Serine 948 is modified (phosphoserine). Residues 957–968 (EAAAPAVVASPP) show a composition bias toward low complexity. Positions 981–1059 (EGIHSHDGSD…HLNRHLVNVY (79 aa)) are interaction with RCOR1. A C2H2-type 9 zinc finger spans residues 1032–1054 (FVCIFCDRSFRKEKDYSKHLNRH).

In terms of assembly, isoform 1 and isoform 6 form heterodimers. Isoform 6: Forms homodimers and homooligomers; binds to the neuron-restrictive silencer element (NRSE) as monomer. Interacts with SIN3A, SIN3B and RCOR1. Interacts with CDYL. Interacts with EHMT1 and EHMT2 only in the presence of CDYL. Part of a complex containing at least CDYL, REST, WIZ, SETB1, EHMT1 and EHMT2. Interacts (via zinc-finger DNA-binding domain) with ZFP90 (via N- and C-termini); the interaction inhibits REST repressor activity. Interacts (via C2H2-type zinc finger 5) with PRICKLE1. Interacts with FBXW11 and BTRC. Interacts with USP7. O-glycosylated. Post-translationally, phosphorylated; phosphorylation is required for ubiquitination. In terms of processing, ubiquitinated; ubiquitination is mediated by BTRC and leads to proteasomal degradation in G2 phase. Ubiquitination increases during neuronal differentiation. Deubiquitinated by USP7; leading to its stabilization and promoting the maintenance of neural progenitor cells. As to expression, expressed in the hippocampus including the granule cell layer of the dentate gyrus, the pyramidal cell layers of CA1 and CA3, the apical and basilar dendrite layers of the stratum radiatum and stratum oriens of CA1, the stratum lucidum and stratum oriens of CA3 and in astroglia (at protein level). Expressed in the brain, with the highest levels in the neurons of hippocampus, pons/medulla and midbrain.

Its subcellular location is the nucleus. It localises to the cytoplasm. In terms of biological role, transcriptional repressor which binds neuron-restrictive silencer element (NRSE) and represses neuronal gene transcription in non-neuronal cells. Restricts the expression of neuronal genes by associating with two distinct corepressors, SIN3A and RCOR1, which in turn recruit histone deacetylase to the promoters of REST-regulated genes. Mediates repression by recruiting the BHC complex at RE1/NRSE sites which acts by deacetylating and demethylating specific sites on histones, thereby acting as a chromatin modifier. Transcriptional repression by REST-CDYL via the recruitment of histone methyltransferase EHMT2 may be important in transformation suppression. Represses the expression of SRRM4 in non-neural cells to prevent the activation of neural-specific splicing events and to prevent production of REST isoform 6. Repressor activity may be inhibited by forming heterodimers with isoform 6, thereby preventing binding to NRSE or binding to corepressors and leading to derepression of target genes. Also maintains repression of neuronal genes in neural stem cells, and allows transcription and differentiation into neurons by dissociation from RE1/NRSE sites of target genes. Thereby is involved in maintaining the quiescent state of adult hippocampal neural stem cells and preventing premature differentiation into mature neurons. Plays a role in the developmental switch in synaptic NMDA receptor composition during postnatal development, by repressing GRIN2B expression and thereby altering NMDA receptor properties from containing primarily GRIN2B to primarily GRIN2A subunits. Acts as a regulator of osteoblast differentiation. Key repressor of gene expression in hypoxia; represses genes in hypoxia by direct binding to an RE1/NRSE site on their promoter regions. May also function in stress resistance in the brain during aging; possibly by regulating expression of genes involved in cell death and in the stress response. Repressor of gene expression in the hippocampus after ischemia by directly binding to RE1/NRSE sites and recruiting SIN3A and RCOR1 to promoters of target genes, thereby promoting changes in chromatin modifications and ischemia-induced cell death. After ischemia, might play a role in repression of miR-132 expression in hippocampal neurons, thereby leading to neuronal cell death. Its function is as follows. Binds to the 3' region of the neuron-restrictive silencer element (NRSE), with lower affinity than full-length REST isoform 1. Exhibits weaker repressor activity compared to isoform 1. May negatively regulate the repressor activity of isoform 1 by binding to isoform 1, thereby preventing its binding to NRSE and leading to derepression of target genes. However, in another study, does not appear to be implicated in repressor activity of a NRSE motif-containing reporter construct nor in inhibitory activity on the isoform 1 transcriptional repressor activity. Post-transcriptional inactivation of REST by SRRM4-dependent alternative splicing into isoform 6 is required in mechanosensory hair cells in the inner ear for derepression of neuronal genes and hearing. The protein is RE1-silencing transcription factor (Rest) of Rattus norvegicus (Rat).